The primary structure comprises 310 residues: Homoserine kinase (310 aa).

ATP is bound at residue 91–101; sequence PIGSGLGSSAC.

Belongs to the GHMP kinase family. Homoserine kinase subfamily.

It is found in the cytoplasm. The catalysed reaction is L-homoserine + ATP = O-phospho-L-homoserine + ADP + H(+). It functions in the pathway amino-acid biosynthesis; L-threonine biosynthesis; L-threonine from L-aspartate: step 4/5. Its function is as follows. Catalyzes the ATP-dependent phosphorylation of L-homoserine to L-homoserine phosphate. This chain is Homoserine kinase, found in Escherichia coli O6:H1 (strain CFT073 / ATCC 700928 / UPEC).